A 362-amino-acid polypeptide reads, in one-letter code: Peptide chain release factor 1 (362 aa).

Position 237 is an N5-methylglutamine (Gln-237).

This sequence belongs to the prokaryotic/mitochondrial release factor family. Post-translationally, methylated by PrmC. Methylation increases the termination efficiency of RF1.

Its subcellular location is the cytoplasm. Functionally, peptide chain release factor 1 directs the termination of translation in response to the peptide chain termination codons UAG and UAA. This Vibrio vulnificus (strain CMCP6) protein is Peptide chain release factor 1.